Reading from the N-terminus, the 101-residue chain is Fructose-bisphosphate aldolase (101 aa).

K11 serves as the catalytic Schiff-base intermediate with dihydroxyacetone-P.

Belongs to the class I fructose-bisphosphate aldolase family.

It catalyses the reaction beta-D-fructose 1,6-bisphosphate = D-glyceraldehyde 3-phosphate + dihydroxyacetone phosphate. It functions in the pathway carbohydrate degradation; glycolysis; D-glyceraldehyde 3-phosphate and glycerone phosphate from D-glucose: step 4/4. The polypeptide is Fructose-bisphosphate aldolase (Lymnaea stagnalis (Great pond snail)).